A 153-amino-acid chain; its full sequence is Endoribonuclease YbeY (153 aa).

Zn(2+) contacts are provided by His114, His118, and His124.

The protein belongs to the endoribonuclease YbeY family. Zn(2+) serves as cofactor.

Its subcellular location is the cytoplasm. In terms of biological role, single strand-specific metallo-endoribonuclease involved in late-stage 70S ribosome quality control and in maturation of the 3' terminus of the 16S rRNA. The chain is Endoribonuclease YbeY from Shewanella oneidensis (strain ATCC 700550 / JCM 31522 / CIP 106686 / LMG 19005 / NCIMB 14063 / MR-1).